Consider the following 159-residue polypeptide: Ribosomal RNA large subunit methyltransferase H (159 aa).

S-adenosyl-L-methionine-binding positions include L76, G108, and 127-132 (FSRMTF).

The protein belongs to the RNA methyltransferase RlmH family. In terms of assembly, homodimer.

It is found in the cytoplasm. It catalyses the reaction pseudouridine(1915) in 23S rRNA + S-adenosyl-L-methionine = N(3)-methylpseudouridine(1915) in 23S rRNA + S-adenosyl-L-homocysteine + H(+). In terms of biological role, specifically methylates the pseudouridine at position 1915 (m3Psi1915) in 23S rRNA. The chain is Ribosomal RNA large subunit methyltransferase H from Bacillus licheniformis (strain ATCC 14580 / DSM 13 / JCM 2505 / CCUG 7422 / NBRC 12200 / NCIMB 9375 / NCTC 10341 / NRRL NRS-1264 / Gibson 46).